We begin with the raw amino-acid sequence, 97 residues long: Large ribosomal subunit protein eL21 (97 aa).

This sequence belongs to the eukaryotic ribosomal protein eL21 family.

In Archaeoglobus fulgidus (strain ATCC 49558 / DSM 4304 / JCM 9628 / NBRC 100126 / VC-16), this protein is Large ribosomal subunit protein eL21 (rpl21e).